The primary structure comprises 198 residues: Molybdenum cofactor guanylyltransferase (198 aa).

GTP-binding positions include 14–16, Lys-27, Asp-73, and Asp-103; that span reads LAG. A Mg(2+)-binding site is contributed by Asp-103.

The protein belongs to the MobA family. As to quaternary structure, monomer. It depends on Mg(2+) as a cofactor.

The protein resides in the cytoplasm. It carries out the reaction Mo-molybdopterin + GTP + H(+) = Mo-molybdopterin guanine dinucleotide + diphosphate. Transfers a GMP moiety from GTP to Mo-molybdopterin (Mo-MPT) cofactor (Moco or molybdenum cofactor) to form Mo-molybdopterin guanine dinucleotide (Mo-MGD) cofactor. This chain is Molybdenum cofactor guanylyltransferase, found in Pseudomonas aeruginosa (strain LESB58).